The following is a 144-amino-acid chain: 3-hydroxyacyl-[acyl-carrier-protein] dehydratase FabZ (144 aa).

The active site involves His48.

The protein belongs to the thioester dehydratase family. FabZ subfamily.

It localises to the cytoplasm. The catalysed reaction is a (3R)-hydroxyacyl-[ACP] = a (2E)-enoyl-[ACP] + H2O. Functionally, involved in unsaturated fatty acids biosynthesis. Catalyzes the dehydration of short chain beta-hydroxyacyl-ACPs and long chain saturated and unsaturated beta-hydroxyacyl-ACPs. This is 3-hydroxyacyl-[acyl-carrier-protein] dehydratase FabZ from Bacillus licheniformis (strain ATCC 14580 / DSM 13 / JCM 2505 / CCUG 7422 / NBRC 12200 / NCIMB 9375 / NCTC 10341 / NRRL NRS-1264 / Gibson 46).